Consider the following 650-residue polypeptide: Gamma-tubulin complex component 4 homolog (650 aa).

S214 is subject to Phosphoserine. T216 carries the post-translational modification Phosphothreonine. Phosphoserine is present on S218.

This sequence belongs to the TUBGCP family.

Its subcellular location is the cytoplasm. The protein resides in the cytoskeleton. The protein localises to the microtubule organizing center. It is found in the centrosome. Functionally, gamma-tubulin complex is necessary for microtubule nucleation at the centrosome. This Drosophila melanogaster (Fruit fly) protein is Gamma-tubulin complex component 4 homolog (Grip75).